The chain runs to 149 residues: FAD synthase (149 aa).

ATP contacts are provided by residues 9–10 (VF), 14–17 (HPGH), D93, and Y120.

This sequence belongs to the archaeal FAD synthase family. In terms of assembly, homodimer. It depends on a divalent metal cation as a cofactor.

It catalyses the reaction FMN + ATP + H(+) = FAD + diphosphate. Its pathway is cofactor biosynthesis; FAD biosynthesis; FAD from FMN: step 1/1. Catalyzes the transfer of the AMP portion of ATP to flavin mononucleotide (FMN) to produce flavin adenine dinucleotide (FAD) coenzyme. This is FAD synthase from Aciduliprofundum boonei (strain DSM 19572 / T469).